We begin with the raw amino-acid sequence, 274 residues long: D-aminopeptidase (274 aa).

Residues aspartate 8, glutamate 10, histidine 60, and histidine 104 each coordinate Zn(2+). Catalysis depends on histidine 115, which acts as the Nucleophile. Residue glutamate 133 participates in Zn(2+) binding.

The protein belongs to the peptidase M55 family. As to quaternary structure, homodecamer. A 20 Angstroms wide channel runs through the complex, giving access to a central chamber holding the active sites. The cofactor is Zn(2+).

In terms of biological role, hydrolyzes N-terminal residues in D-amino acid containing peptides. Among the tested substrates, the highest activities are with D-Ala-D-Ala and D-Ala-Gly-Gly. The physiological role is not clear. In Bacillus subtilis (strain 168), this protein is D-aminopeptidase (dppA).